Consider the following 293-residue polypeptide: tRNA pseudouridine synthase A (293 aa).

Aspartate 60 serves as the catalytic Nucleophile. Tyrosine 118 serves as a coordination point for substrate.

This sequence belongs to the tRNA pseudouridine synthase TruA family. As to quaternary structure, homodimer.

The enzyme catalyses uridine(38/39/40) in tRNA = pseudouridine(38/39/40) in tRNA. Formation of pseudouridine at positions 38, 39 and 40 in the anticodon stem and loop of transfer RNAs. The chain is tRNA pseudouridine synthase A from Rippkaea orientalis (strain PCC 8801 / RF-1) (Cyanothece sp. (strain PCC 8801)).